The primary structure comprises 33 residues: Cytochrome c oxidase subunit 5B liver, mitochondrial (33 aa).

It belongs to the cytochrome c oxidase subunit 5B family. In terms of assembly, component of the cytochrome c oxidase (complex IV, CIV), a multisubunit enzyme composed of 14 subunits. The complex is composed of a catalytic core of 3 subunits MT-CO1, MT-CO2 and MT-CO3, encoded in the mitochondrial DNA, and 11 supernumerary subunits COX4I, COX5A, COX5B, COX6A, COX6B, COX6C, COX7A, COX7B, COX7C, COX8 and NDUFA4, which are encoded in the nuclear genome. The complex exists as a monomer or a dimer and forms supercomplexes (SCs) in the inner mitochondrial membrane with NADH-ubiquinone oxidoreductase (complex I, CI) and ubiquinol-cytochrome c oxidoreductase (cytochrome b-c1 complex, complex III, CIII), resulting in different assemblies (supercomplex SCI(1)III(2)IV(1) and megacomplex MCI(2)III(2)IV(2)).

It is found in the mitochondrion inner membrane. Its pathway is energy metabolism; oxidative phosphorylation. Component of the cytochrome c oxidase, the last enzyme in the mitochondrial electron transport chain which drives oxidative phosphorylation. The respiratory chain contains 3 multisubunit complexes succinate dehydrogenase (complex II, CII), ubiquinol-cytochrome c oxidoreductase (cytochrome b-c1 complex, complex III, CIII) and cytochrome c oxidase (complex IV, CIV), that cooperate to transfer electrons derived from NADH and succinate to molecular oxygen, creating an electrochemical gradient over the inner membrane that drives transmembrane transport and the ATP synthase. Cytochrome c oxidase is the component of the respiratory chain that catalyzes the reduction of oxygen to water. Electrons originating from reduced cytochrome c in the intermembrane space (IMS) are transferred via the dinuclear copper A center (CU(A)) of subunit 2 and heme A of subunit 1 to the active site in subunit 1, a binuclear center (BNC) formed by heme A3 and copper B (CU(B)). The BNC reduces molecular oxygen to 2 water molecules using 4 electrons from cytochrome c in the IMS and 4 protons from the mitochondrial matrix. This Oncorhynchus mykiss (Rainbow trout) protein is Cytochrome c oxidase subunit 5B liver, mitochondrial.